The chain runs to 659 residues: Endoglucanase A (659 aa).

Residues 1 to 500 (MLIFETYLIL…SKLPNFPPKE (500 aa)) form a catalytic region. The active-site Nucleophile is D101. Residues 413-433 (NSPKHPHHRTAHGSWSNQLTN) are disordered. Catalysis depends on residues H419, D457, and E466. Residues 501 to 658 (QVEDEFFVEA…GVLVFGTLPD (158 aa)) enclose the CBM3 domain.

This sequence belongs to the glycosyl hydrolase 9 (cellulase E) family.

The protein resides in the secreted. The catalysed reaction is Endohydrolysis of (1-&gt;4)-beta-D-glucosidic linkages in cellulose, lichenin and cereal beta-D-glucans.. With respect to regulation, strongly inhibited by ZnCl(2) and by EDTA. Active on carboxymethyl cellulose and carboxymethyl cellulose-RBB but not avicel, xanthan gum, carboxymethyl-curdulan-RBB or carboxymethyl-xylan-RBB. This Bacillus pumilus (Bacillus mesentericus) protein is Endoglucanase A (eglA).